The chain runs to 230 residues: ATP synthase subunit a (230 aa).

6 helical membrane passes run Leu16–Ile36, Trp73–Leu93, Thr106–Phe126, Leu142–Gly162, Leu165–Thr185, and Ile192–Cys212.

Belongs to the ATPase A chain family. As to quaternary structure, F-type ATPases have 2 components, CF(1) - the catalytic core - and CF(0) - the membrane proton channel. CF(1) has five subunits: alpha(3), beta(3), gamma(1), delta(1), epsilon(1). CF(0) has three main subunits: a, b and c.

The protein localises to the mitochondrion inner membrane. Mitochondrial membrane ATP synthase (F(1)F(0) ATP synthase or Complex V) produces ATP from ADP in the presence of a proton gradient across the membrane which is generated by electron transport complexes of the respiratory chain. F-type ATPases consist of two structural domains, F(1) - containing the extramembraneous catalytic core and F(0) - containing the membrane proton channel, linked together by a central stalk and a peripheral stalk. During catalysis, ATP synthesis in the catalytic domain of F(1) is coupled via a rotary mechanism of the central stalk subunits to proton translocation. Key component of the proton channel; it may play a direct role in the translocation of protons across the membrane. The protein is ATP synthase subunit a (ATP6) of Patiria pectinifera (Starfish).